Consider the following 274-residue polypeptide: MKLDTSGFETSMPMIGFGSSSDMLDELSSVPSFDLPRTKEFDGFQKKAKDMLKHAKGTTTLAFIFKGGVMVAADSRASMGGYISSQSVKKIIEINPYMLGTMAGGAADCQFWHRNLGIKCRLHELANKRRISVSGASKLLANMLYSYRGMGLSVGTMIAGWDETGPGLYYVDNEGGRLKGDRFSVGSGSPYAYGVLDSGYKYDMSVEEASELARRSIYHATFRDGASGGVASVYHVGPEGWTKLSGDDVGELHYHYYPVAPATAEQVMEEATAE.

A propeptide spans Met-1–Gly-57 (removed in mature form). Residue Thr-58 is the Nucleophile of the active site.

Belongs to the peptidase T1B family. Component of the 20S core complex of the 26S proteasome. The 26S proteasome is composed of a core protease (CP), known as the 20S proteasome, capped at one or both ends by the 19S regulatory particle (RP/PA700). The 20S proteasome core is composed of 28 subunits that are arranged in four stacked rings, resulting in a barrel-shaped structure. The two end rings are each formed by seven alpha subunits, and the two central rings are each formed by seven beta subunits. The catalytic chamber with the active sites is on the inside of the barrel. In terms of tissue distribution, ubiquitous low levels, higher expression in siliques and flowers.

Its subcellular location is the cytoplasm. The protein resides in the nucleus. The enzyme catalyses Cleavage of peptide bonds with very broad specificity.. In terms of biological role, the proteasome is a multicatalytic proteinase complex which is characterized by its ability to cleave peptides with Arg, Phe, Tyr, Leu, and Glu adjacent to the leaving group at neutral or slightly basic pH. The proteasome has an ATP-dependent proteolytic activity. This is Proteasome subunit beta type-5-A (PBE1) from Arabidopsis thaliana (Mouse-ear cress).